The primary structure comprises 194 residues: 5'-deoxynucleotidase VC_1978 (194 aa).

Substrate is bound by residues 18–19 (RW) and His-33. Residues 30–142 (ISEHSLQVAF…VKQADAICAY (113 aa)) form the HD domain. Positions 33, 68, and 69 each coordinate a divalent metal cation. Substrate-binding positions include Asp-69, 77-80 (DLPT), and Asp-137. Residue Asp-137 coordinates a divalent metal cation.

The protein belongs to the 5DNU family. In terms of assembly, homodimer. A divalent metal cation serves as cofactor.

It is found in the cytoplasm. The catalysed reaction is a 2'-deoxyribonucleoside 5'-phosphate + H2O = a 2'-deoxyribonucleoside + phosphate. Its function is as follows. Catalyzes the strictly specific dephosphorylation of 2'-deoxyribonucleoside 5'-monophosphates. In Vibrio cholerae serotype O1 (strain ATCC 39315 / El Tor Inaba N16961), this protein is 5'-deoxynucleotidase VC_1978.